We begin with the raw amino-acid sequence, 61 residues long: UPF0391 membrane protein Aave_0978 (61 aa).

Transmembrane regions (helical) follow at residues 5-25 (AIIF…GVAA) and 33-53 (ILFF…VLGV).

This sequence belongs to the UPF0391 family.

It localises to the cell membrane. The polypeptide is UPF0391 membrane protein Aave_0978 (Paracidovorax citrulli (strain AAC00-1) (Acidovorax citrulli)).